A 189-amino-acid polypeptide reads, in one-letter code: Peptide deformylase (189 aa).

The Fe cation site is built by Cys116 and His159. The active site involves Glu160. Residue His163 participates in Fe cation binding.

Belongs to the polypeptide deformylase family. It depends on Fe(2+) as a cofactor.

It carries out the reaction N-terminal N-formyl-L-methionyl-[peptide] + H2O = N-terminal L-methionyl-[peptide] + formate. Removes the formyl group from the N-terminal Met of newly synthesized proteins. Requires at least a dipeptide for an efficient rate of reaction. N-terminal L-methionine is a prerequisite for activity but the enzyme has broad specificity at other positions. In Limosilactobacillus fermentum (strain NBRC 3956 / LMG 18251) (Lactobacillus fermentum), this protein is Peptide deformylase.